The primary structure comprises 213 residues: Nucleolar protein 12 (213 aa).

Residues 32–95 (GFHKRKVERK…RLVTAKTESV (64 aa)) are a coiled coil. The segment at 117–213 (ARLLGLPTPE…LTGKARHSGE (97 aa)) is disordered. 2 stretches are compositionally biased toward basic residues: residues 169–181 (AHSR…KRLR) and 197–213 (SKTR…HSGE).

The protein belongs to the RRP17 family. As to quaternary structure, interacts with KIAA1191.

It localises to the nucleus. Its subcellular location is the nucleolus. It is found in the cytoplasm. Multifunctional RNA binding protein that plays a role in RNA metabolism and DNA maintenance. Participates in the resolution of DNA stress and the maintenance of genome integrity by localizing to sites of DNA insults. Also plays a role in proper nucleolar organization by limiting nucleolar size and regulating nucleolar number. Mechanistically, regulates the nucleolar levels of fibrillarin and nucleolin, two key players in pre-rRNA processing and ribosome assembly. The sequence is that of Nucleolar protein 12 (NOL12) from Bos taurus (Bovine).